A 1184-amino-acid chain; its full sequence is MSGHSGHDVKYGRHRTRRSFARISEVLELPNLIEIQTASYQWFLDEGLREMFRDISPIEDFAGNLSLEFIDYDLGEPKYSVEESKNRDANYAAPLRVKLRLINKETGEVKDQEVFMGDFPLMTEMGTFIINGAERVIVSQLVRSPGVYFNGKLDKNGKKGFGSTVIPNRGAWLEYETDAKDVVHVRIDRTRKLPVTVLLRALGFGSDQEIIDLIGDNDYLRNTLEKDNTDNAEKALLEIYERLRPGEPPTVDNARSLLVSRFFDPKRYDLASVGRYKINKKLHLKNRLFNQTLAETLVDPETGEIIASKGDILDRRNLDQIIPNLENGVGFRTLRPTDGVMEDSVLVQSIKIYAPNDEEKEINIIGNAYIEENVKHITPSDIISSISYFFNLLHGVGDTDDIDHLGNRRLRSVGELLQNQFRIGLSRMERVVRERMSIQDMTTITPQQLINIRPVVASIKEFFGSSQLSQFMDQTNPLGELTHKRRLSALGPGGLTRERAGYEVRDVHYSHYGRMCPIETPEGPNIGLINSLSSFAKVNKFGFIETPYRRVDPETNRVTDKIDYLTADEEDNYVVAQANSKLDEQGTFTEEEVMARFRSENLAVEKERIDYMDVSPKQVVSVATACIPFLENDDSNRALMGANMQRQAVPLMHPEAPFVGTGMEHVSAKDSGAAVTAKHDGIVEHVEAREIWVRRVSLVDGKEVTGGIDKYTLRKFVRSNQGTCYNQRPNVAEGDRVVKGEILGNGPSMDSGELALGRNVLVAFMTWDGYNYEDAIIMSERLVKDDVYTSIHIEEFESEARDTKLGPEEMTRDIPNVGEDALRDLDERGIIRVGAEVKDNDLLVGKVTPKGVTELTAEERLLHAIFGEKAREVRDTSLRVPHGGGGIVLDVKIFTREAGDELPPGVNQLVRVYIVQKRKIHEGDKMAGRHGNKGVISRILPEEDMPFMPDGTPVDIMLNPLGVPSRMNIGQVLELHLGMAARALGIHVATPVFDGANEEDVWSTVEEAGMARDAKTVLYDGRSGEAFDNRISVGVMYMIKLAHMVDDKLHARSTGPYSLVTQQPLGGKAQFGGQRFGEMEVWALEAYGAAYTLQEILTIKSDDVVGRVKTYEAIVKGESVPEPGVPESFKVLIKELQSLGMDVKMLSADEEEIEMRDMDDDDFTNQNDAFNIVQPENAAAEKTE.

A disordered region spans residues 1160–1184 (DDDFTNQNDAFNIVQPENAAAEKTE).

Belongs to the RNA polymerase beta chain family. The RNAP catalytic core consists of 2 alpha, 1 beta, 1 beta' and 1 omega subunit. When a sigma factor is associated with the core the holoenzyme is formed, which can initiate transcription.

It catalyses the reaction RNA(n) + a ribonucleoside 5'-triphosphate = RNA(n+1) + diphosphate. DNA-dependent RNA polymerase catalyzes the transcription of DNA into RNA using the four ribonucleoside triphosphates as substrates. This chain is DNA-directed RNA polymerase subunit beta, found in Listeria welshimeri serovar 6b (strain ATCC 35897 / DSM 20650 / CCUG 15529 / CIP 8149 / NCTC 11857 / SLCC 5334 / V8).